A 526-amino-acid polypeptide reads, in one-letter code: Cytochrome P450 monooxygenase patI (526 aa).

Over methionine 1–leucine 6 the chain is Cytoplasmic. A helical membrane pass occupies residues alanine 7 to leucine 29. Over arginine 30–aspartate 526 the chain is Lumenal. A glycan (N-linked (GlcNAc...) asparagine) is linked at asparagine 81. Cysteine 446 contributes to the heme binding site.

It belongs to the cytochrome P450 family. Requires heme as cofactor.

It localises to the endoplasmic reticulum membrane. The enzyme catalyses 3-hydroxybenzyl alcohol + reduced [NADPH--hemoprotein reductase] + O2 = gentisyl alcohol + oxidized [NADPH--hemoprotein reductase] + H2O + H(+). The protein operates within mycotoxin biosynthesis; patulin biosynthesis. In terms of biological role, cytochrome P450 monooxygenase; part of the gene cluster that mediates the biosynthesis of patulin, an acetate-derived tetraketide mycotoxin produced by several fungal species that shows antimicrobial properties against several bacteria. PatI catalyzes the conversion of m-hydroxybenzyl alcohol into gentisyl alcohol. The pathway begins with the synthesis of 6-methylsalicylic acid by the polyketide synthase (PKS) patK via condensation of acetate and malonate units. The 6-methylsalicylic acid decarboxylase patG then catalyzes the decarboxylation of 6-methylsalicylic acid to yield m-cresol (also known as 3-methylphenol). These first reactions occur in the cytosol. The intermediate m-cresol is then transported into the endoplasmic reticulum where the cytochrome P450 monooxygenase patH converts it to m-hydroxybenzyl alcohol, which is further converted to gentisyl alcohol by the cytochrome P450 monooxygenase patI. The oxidoreductases patJ and patO further convert gentisyl alcohol to isoepoxydon in the vacuole. PatN catalyzes then the transformation of isoepoxydon into phyllostine. The cluster protein patF is responsible for the conversion from phyllostine to neopatulin whereas the alcohol dehydrogenase patD converts neopatulin to E-ascladiol. The steps between isoepoxydon and E-ascladiol occur in the cytosol, and E-ascladiol is probably secreted to the extracellular space by one of the cluster-specific transporters patC or patM. Finally, the secreted patulin synthase patE catalyzes the conversion of E-ascladiol to patulin. This chain is Cytochrome P450 monooxygenase patI, found in Penicillium expansum (Blue mold rot fungus).